The primary structure comprises 199 residues: Thymidine kinase (199 aa).

Residues 15–22 (GSMFSGKS) and 88–91 (DEVQ) contribute to the ATP site. Glu-89 functions as the Proton acceptor in the catalytic mechanism. Zn(2+)-binding residues include Cys-145, Cys-148, Cys-183, and His-186.

This sequence belongs to the thymidine kinase family. Homotetramer.

It localises to the cytoplasm. It carries out the reaction thymidine + ATP = dTMP + ADP + H(+). The polypeptide is Thymidine kinase (Staphylococcus epidermidis (strain ATCC 12228 / FDA PCI 1200)).